We begin with the raw amino-acid sequence, 363 residues long: Carbamoyl phosphate synthase small chain (363 aa).

CPSase regions lie at residues 1–168 (MTKR…ASPG) and 1–172 (MTKR…DGKR). S46, G220, and G222 together coordinate L-glutamine. The region spanning 172–359 (RVVLVDYGVK…MEMMNVKEEG (188 aa)) is the Glutamine amidotransferase type-1 domain. Catalysis depends on C247, which acts as the Nucleophile. The L-glutamine site is built by L248, Q251, N289, G291, and Y292. Catalysis depends on residues H332 and E334.

This sequence belongs to the CarA family. As to quaternary structure, composed of two chains; the small (or glutamine) chain promotes the hydrolysis of glutamine to ammonia, which is used by the large (or ammonia) chain to synthesize carbamoyl phosphate. Tetramer of heterodimers (alpha,beta)4.

It catalyses the reaction hydrogencarbonate + L-glutamine + 2 ATP + H2O = carbamoyl phosphate + L-glutamate + 2 ADP + phosphate + 2 H(+). It carries out the reaction L-glutamine + H2O = L-glutamate + NH4(+). It functions in the pathway amino-acid biosynthesis; L-arginine biosynthesis; carbamoyl phosphate from bicarbonate: step 1/1. Its pathway is pyrimidine metabolism; UMP biosynthesis via de novo pathway; (S)-dihydroorotate from bicarbonate: step 1/3. In terms of biological role, small subunit of the glutamine-dependent carbamoyl phosphate synthetase (CPSase). CPSase catalyzes the formation of carbamoyl phosphate from the ammonia moiety of glutamine, carbonate, and phosphate donated by ATP, constituting the first step of 2 biosynthetic pathways, one leading to arginine and/or urea and the other to pyrimidine nucleotides. The small subunit (glutamine amidotransferase) binds and cleaves glutamine to supply the large subunit with the substrate ammonia. This is Carbamoyl phosphate synthase small chain from Listeria innocua serovar 6a (strain ATCC BAA-680 / CLIP 11262).